Consider the following 1035-residue polypeptide: MASVFMCGVEDLLFSGSRFVWNLTVSTLRRWYTERLRACHQVLRTWCGLRDVYQMTEGRHCQVHLLDDRRLELLVQPKLLSRELLDLVASHFNLKEKEYFGITFIDDTGQENWLQLDHRVLEHDLPKKPGPTLLHFAVRFYIESISFLKDKNTVELFFLNAKACVHKGQIEVDSETIFKLAALVLQESKGDYTSDENARKDLKTLPVFPTKTLQEHPSLAYCEDRVIEHYLKIKGLTRGQAVVQYMKIVEALPTYGVHYYAVKDKQGLPWWLGISYKGIGQYDLQDKVKPRKLFQWKQLENLYFREKKFAVEVHDPRRISVSRRTFGQSGLFVQTWYANSSLIKSIWVMAISQHQFYLDRKQSKAKIPSARSLDDIAMDLTETGTQRGSKLVTLEAKSQFIMASNGSLISSGSQDSEGMEEQKREKILELKKKEKLLQEKLLQKVEELKKICLREAELTGRMPKEYPLNIGEKPPQVRRRVGTTFKLDDNLLPTEEDPALQELESNFLIQQKLVEAAKKLASEPDLCKTVKKKRKQDYTDAVKRLQEIENSINEYRIRCGKKPSQKAAVVPPEDIIPSESSSLSDTTTYDDPNDSFTLAGQRPSSVPHSPRILPPKSLGIERIHFRKSSINEQFMDTRHSREMLSTHSSPYKTLERRPQGGRSMPTTPVLTRNAYSSSHLEPDSSSQHCRQRSGSLESQSHLLSEMDSDKPFFTLSKSQRSSSTEILDDGSSYTSQSSSEYYCVTPAASPYYTTQTLDTRARGRRRSKKHSVSTSNSGSMPNLAQKDPLRNGVYSKGQDPPPSGYYIAGYPPYAECDLYYSGGYVYENDTEGQYSVNPSYRSSAHYGYDRQRDYSRSFHEDEVDRVPHNPYATLRLPRKAAVKSEHITKNIHKALVAEHLRGWYQRASGQKDQGHSPQTSFDSDRGSQRCLGFAGLQVPCSPSSRASSYSSVSSTNASGNWRTQLTIGLSEYENPVHSPYTSYYGSIYNPLSSPSRQYAETTPLDGTDGSQLEDNLEGSEQRLFWHEDSKPGTLV.

An FERM domain is found at 59-361 (RHCQVHLLDD…SQHQFYLDRK (303 aa)). At serine 372 the chain carries Phosphoserine. 2 coiled-coil regions span residues 414–451 (QDSE…LKKI) and 535–559 (KQDY…RIRC). Residues 542-972 (VKRLQEIENS…TQLTIGLSEY (431 aa)) form a necessary for adherens junction and tight junction localization region. Disordered regions lie at residues 563-615 (PSQK…ILPP), 631-699 (NEQF…LESQ), 713-738 (FTLS…SQSS), and 754-798 (TQTL…SKGQ). The span at 571–590 (PPEDIIPSESSSLSDTTTYD) shows a compositional bias: low complexity. Polar residues predominate over residues 594–607 (DSFTLAGQRPSSVP). Residue serine 609 is modified to Phosphoserine. Basic and acidic residues predominate over residues 635-644 (MDTRHSREML). Composition is skewed to polar residues over residues 664-699 (MPTT…LESQ) and 715-725 (LSKSQRSSSTE). At serine 698 the chain carries Phosphoserine. A compositionally biased stretch (basic residues) spans 762 to 771 (RGRRRSKKHS). Over residues 772-782 (VSTSNSGSMPN) the composition is skewed to polar residues. Lysine 883 participates in a covalent cross-link: Glycyl lysine isopeptide (Lys-Gly) (interchain with G-Cter in SUMO2). Disordered regions lie at residues 906-926 (RASG…SDRG), 939-958 (PCSP…TNAS), and 994-1035 (PSRQ…GTLV). The span at 907–921 (ASGQKDQGHSPQTSF) shows a compositional bias: polar residues. At serine 916 the chain carries Phosphoserine. Residues 941-958 (SPSSRASSYSSVSSTNAS) are compositionally biased toward low complexity. The span at 1019 to 1035 (SEQRLFWHEDSKPGTLV) shows a compositional bias: basic and acidic residues. A Glycyl lysine isopeptide (Lys-Gly) (interchain with G-Cter in SUMO2) cross-link involves residue lysine 1030.

In terms of assembly, interacts with CYTH3. Interacts with PARD3. Interacts with CYTH1. As to expression, isoform 1 is expressed in the brain. Isoform 2 is expressed in the lung (at protein level).

The protein localises to the cytoplasm. The protein resides in the cytoskeleton. It is found in the cell junction. Its subcellular location is the tight junction. It localises to the adherens junction. Its function is as follows. Member of GRP1 signaling complexes that are acutely recruited to plasma membrane ruffles in response to insulin receptor signaling. May function as a scaffolding protein that regulates epithelial cell polarity by connecting ARF6 activation with the PAR3 complex. Plays a redundant role with FRMD4A in epithelial polarization. The chain is FERM domain-containing protein 4B (Frmd4b) from Mus musculus (Mouse).